The following is a 237-amino-acid chain: Small ribosomal subunit protein eS4 (237 aa).

One can recognise an S4 RNA-binding domain in the interval 37–99 (VPLLIVLRDV…REEYYRIFPD (63 aa)).

This sequence belongs to the eukaryotic ribosomal protein eS4 family.

The polypeptide is Small ribosomal subunit protein eS4 (Natronomonas pharaonis (strain ATCC 35678 / DSM 2160 / CIP 103997 / JCM 8858 / NBRC 14720 / NCIMB 2260 / Gabara) (Halobacterium pharaonis)).